The chain runs to 408 residues: Probable serine/threonine-protein kinase PBL16 (408 aa).

G2 carries the N-myristoyl glycine lipid modification. A lipid anchor (S-palmitoyl cysteine) is attached at C4. The interval 17 to 50 is disordered; sequence ANAKSESPKEQSPTVEDKHIKEVQKLPSNPKEVE. Residues 18–30 show a composition bias toward polar residues; that stretch reads NAKSESPKEQSPT. The segment covering 31–40 has biased composition (basic and acidic residues); it reads VEDKHIKEVQ. Phosphothreonine is present on T65. Positions 76–360 constitute a Protein kinase domain; the sequence is FRQDRVLGGG…DIVDSLEPLQ (285 aa). ATP contacts are provided by residues 82–90 and K113; that span reads LGGGGFGSV. Y159 is subject to Phosphotyrosine. The Proton acceptor role is filled by D209. A phosphoserine mark is found at S213 and S243. 2 positions are modified to phosphothreonine: T244 and T249. Phosphotyrosine is present on Y257.

This sequence belongs to the protein kinase superfamily. Ser/Thr protein kinase family. Post-translationally, palmitoylation at Cys-4 and Cys-6 are required for plasma membrane location.

The protein resides in the cell membrane. It catalyses the reaction L-seryl-[protein] + ATP = O-phospho-L-seryl-[protein] + ADP + H(+). The enzyme catalyses L-threonyl-[protein] + ATP = O-phospho-L-threonyl-[protein] + ADP + H(+). In terms of biological role, may be involved in plant defense signaling. This is Probable serine/threonine-protein kinase PBL16 from Arabidopsis thaliana (Mouse-ear cress).